A 614-amino-acid polypeptide reads, in one-letter code: Numb-like protein (614 aa).

Disordered regions lie at residues 1 to 68, 223 to 283, 371 to 420, 448 to 468, and 539 to 614; these read MSRS…QWQA, GSFR…PVAA, FASA…LEEV, QQQQATSVPPMPTMAPTLQPF, and LGKA…EIEL. Residues 74–223 enclose the PID domain; it reads RKGTCSFPVR…ASRTSFAREG (150 aa). Ser224 and Ser228 each carry phosphoserine. Positions 233–245 are enriched in basic and acidic residues; the sequence is PAEREAGDKKKAE. Positions 246–260 are enriched in low complexity; sequence AAAAPAVAPGPAQPG. A Phosphoserine modification is found at Ser263. Position 279 is a phosphothreonine (Thr279). A compositionally biased stretch (low complexity) spans 371–390; that stretch reads FASAGAPVPGPPSATTGTSA. Basic and acidic residues predominate over residues 409–418; that stretch reads TPSEAERWLE. Ser411 is subject to Phosphoserine. Pro residues predominate over residues 563-578; that stretch reads NGAPWPPEPAPAPAPE.

Associates with EPS15 and NOTCH1. Interacts (via PTB domain) with MAP3K7IP2 (via C-terminal). Interacts (via C-terminal) with TRAF6 (via TRAF domains).

The protein resides in the cytoplasm. In terms of biological role, plays a role in the process of neurogenesis. Required throughout embryonic neurogenesis to maintain neural progenitor cells, also called radial glial cells (RGCs), by allowing their daughter cells to choose progenitor over neuronal cell fate. Not required for the proliferation of neural progenitor cells before the onset of embryonic neurogenesis. Also required postnatally in the subventricular zone (SVZ) neurogenesis by regulating SVZ neuroblasts survival and ependymal wall integrity. Negative regulator of NF-kappa-B signaling pathway. The inhibition of NF-kappa-B activation is mediated at least in part, by preventing MAP3K7IP2 to interact with polyubiquitin chains of TRAF6 and RIPK1 and by stimulating the 'Lys-48'-linked polyubiquitination and degradation of TRAF6 in cortical neurons. In Rattus norvegicus (Rat), this protein is Numb-like protein (Numbl).